The following is a 379-amino-acid chain: Cytochrome b (379 aa).

The next 4 helical transmembrane spans lie at 33–53 (FGSLLGMCLVIQILTGLFLAM), 77–98 (WLIRYLHANGASMFFICLFIHV), 113–133 (WNIGIILLLTTMATAFVGYVL), and 178–198 (FFAFHFILPFIIAAFALVHLL). Heme b contacts are provided by His-83 and His-97. The heme b site is built by His-182 and His-196. Residue His-201 coordinates a ubiquinone. 4 helical membrane-spanning segments follow: residues 226 to 246 (IKDLLGIFLLLLVLMTLALFF), 288 to 308 (LGGVLALVLSILILAAFPLLN), 320 to 340 (VTQTIYWIFIANLLVLTWIGG), and 347 to 367 (FTTIGQIASITYFTIIIILIP).

Belongs to the cytochrome b family. In terms of assembly, the cytochrome bc1 complex contains 11 subunits: 3 respiratory subunits (MT-CYB, CYC1 and UQCRFS1), 2 core proteins (UQCRC1 and UQCRC2) and 6 low-molecular weight proteins (UQCRH/QCR6, UQCRB/QCR7, UQCRQ/QCR8, UQCR10/QCR9, UQCR11/QCR10 and a cleavage product of UQCRFS1). This cytochrome bc1 complex then forms a dimer. It depends on heme b as a cofactor.

It localises to the mitochondrion inner membrane. Component of the ubiquinol-cytochrome c reductase complex (complex III or cytochrome b-c1 complex) that is part of the mitochondrial respiratory chain. The b-c1 complex mediates electron transfer from ubiquinol to cytochrome c. Contributes to the generation of a proton gradient across the mitochondrial membrane that is then used for ATP synthesis. This is Cytochrome b (MT-CYB) from Akodon lindberghi (Lindbergh's grass mouse).